Reading from the N-terminus, the 177-residue chain is Protein GrpE (177 aa).

Belongs to the GrpE family. In terms of assembly, homodimer.

The protein resides in the cytoplasm. Participates actively in the response to hyperosmotic and heat shock by preventing the aggregation of stress-denatured proteins, in association with DnaK and GrpE. It is the nucleotide exchange factor for DnaK and may function as a thermosensor. Unfolded proteins bind initially to DnaJ; upon interaction with the DnaJ-bound protein, DnaK hydrolyzes its bound ATP, resulting in the formation of a stable complex. GrpE releases ADP from DnaK; ATP binding to DnaK triggers the release of the substrate protein, thus completing the reaction cycle. Several rounds of ATP-dependent interactions between DnaJ, DnaK and GrpE are required for fully efficient folding. The sequence is that of Protein GrpE from Thermus thermophilus (strain ATCC BAA-163 / DSM 7039 / HB27).